The following is a 49-amino-acid chain: Large ribosomal subunit protein bL33B (49 aa).

It belongs to the bacterial ribosomal protein bL33 family.

The protein is Large ribosomal subunit protein bL33B of Staphylococcus saprophyticus subsp. saprophyticus (strain ATCC 15305 / DSM 20229 / NCIMB 8711 / NCTC 7292 / S-41).